Consider the following 817-residue polypeptide: Trehalose-phosphatase (817 aa).

The segment at 1 to 547 is glycosyltransferase; sequence MSVYGKIPST…LAATKTDQRI (547 aa).

It in the N-terminal section; belongs to the glycosyltransferase 20 family. This sequence in the C-terminal section; belongs to the trehalose phosphatase family. In terms of assembly, component of the trehalose synthase complex that contains at least tps1, ntp1, and tpp1. Interacts with tps1. Interacts with ntp1. Mg(2+) is required as a cofactor.

The enzyme catalyses alpha,alpha-trehalose 6-phosphate + H2O = alpha,alpha-trehalose + phosphate. It participates in carbohydrate biosynthesis. In terms of biological role, phosphatase catalytic subunit of the trehalose synthase complex that catalyzes the production of trehalose from glucose-6-phosphate and UDP-alpha-D-glucose in a two step process. The disaccharide trehalose serves as a storage carbohydrate that is mobilized during nutrient stress and spore germination. Together with ntp1, regulates the level of trehalose as a protectant for cell integrity during thermal, osmotic, and oxidative stress. This is Trehalose-phosphatase from Schizosaccharomyces pombe (strain 972 / ATCC 24843) (Fission yeast).